The chain runs to 427 residues: Enolase (427 aa).

Q163 contacts (2R)-2-phosphoglycerate. Catalysis depends on E205, which acts as the Proton donor. Residues D242, E285, and D312 each coordinate Mg(2+). (2R)-2-phosphoglycerate is bound by residues K337, R366, S367, and K388. The active-site Proton acceptor is the K337.

The protein belongs to the enolase family. Mg(2+) serves as cofactor.

Its subcellular location is the cytoplasm. The protein localises to the secreted. The protein resides in the cell surface. It catalyses the reaction (2R)-2-phosphoglycerate = phosphoenolpyruvate + H2O. It functions in the pathway carbohydrate degradation; glycolysis; pyruvate from D-glyceraldehyde 3-phosphate: step 4/5. Its function is as follows. Catalyzes the reversible conversion of 2-phosphoglycerate (2-PG) into phosphoenolpyruvate (PEP). It is essential for the degradation of carbohydrates via glycolysis. This Azorhizobium caulinodans (strain ATCC 43989 / DSM 5975 / JCM 20966 / LMG 6465 / NBRC 14845 / NCIMB 13405 / ORS 571) protein is Enolase.